The primary structure comprises 58 residues: Alpha-conotoxin AuIB (58 aa).

The N-terminal stretch at 1–16 (MFTVFLLVVLATTVVS) is a signal peptide. A propeptide spanning residues 17 to 39 (FTSDRASDGRKDAASGLIALTMK) is cleaved from the precursor. Disulfide bonds link Cys-41-Cys-47 and Cys-42-Cys-54. The residue at position 54 (Cys-54) is a Cysteine amide.

In terms of tissue distribution, expressed by the venom duct.

It is found in the secreted. In terms of biological role, alpha-conotoxins act on postsynaptic membranes, they bind to the nicotinic acetylcholine receptors (nAChR) and thus inhibit them. This toxin blocks mammalian nAChR alpha-3-beta-4/CHRNA3-CHRNB4 subunits. Also exhibits inhibition of D.melanogaster alpha-7/CHRNA7 nAChRs. In Conus aulicus (Princely cone), this protein is Alpha-conotoxin AuIB.